A 253-amino-acid chain; its full sequence is U1 small nuclear ribonucleoprotein A (253 aa).

The 80-residue stretch at 23-102 (VTIYINNLNE…KPMRIQYAKT (80 aa)) folds into the RRM 1 domain. The interval 111–140 (DGTFVPRERRKRNDEKPEKKQKREQHHDVS) is disordered. One can recognise an RRM 2 domain in the interval 179–253 (NILFVQNLPH…NQMLISYAKK (75 aa)).

The protein belongs to the RRM U1 A/B'' family. As to quaternary structure, component of the spliceosome where it is associated with snRNP U1.

The protein localises to the nucleus. It is found in the nucleolus. In terms of biological role, involved in nuclear pre-mRNA splicing. The polypeptide is U1 small nuclear ribonucleoprotein A (Oryza sativa subsp. indica (Rice)).